Consider the following 392-residue polypeptide: Speckle-type POZ protein-like (392 aa).

The region spanning 31-161 (KFSYMWTINN…DDKLTLFCEV (131 aa)) is the MATH domain. The BTB domain maps to 200-267 (TDCCFFVRGK…VYTGKAPNLD (68 aa)).

It belongs to the Tdpoz family. Homodimer. Heterodimer with SPOP. Component of cullin-RING-based BCR (BTB-CUL3-RBX1) E3 ubiquitin-protein ligase complexes containing homodimeric SPOPL or the heterodimer formed by SPOP and SPOPL. Interacts with CUL3 and MACROH2A1.

The protein localises to the nucleus. Its pathway is protein modification; protein ubiquitination. Functionally, component of a cullin-RING-based BCR (BTB-CUL3-RBX1) E3 ubiquitin-protein ligase complex that mediates the ubiquitination and subsequent proteasomal degradation of target proteins, but with relatively low efficiency. Cullin-RING-based BCR (BTB-CUL3-RBX1) E3 ubiquitin-protein ligase complexes containing homodimeric SPOPL or the heterodimer formed by SPOP and SPOPL are less efficient than ubiquitin ligase complexes containing only SPOP. May function to down-regulate the activity of cullin-RING-based BCR (BTB-CUL3-RBX1) E3 ubiquitin-protein ligase complexes that contain SPOP. The polypeptide is Speckle-type POZ protein-like (Spopl) (Mus musculus (Mouse)).